Reading from the N-terminus, the 43-residue chain is Metallothionein A (43 aa).

The beta stretch occupies residues 1 to 16 (SCAGSCKCKNCRCRSC). A divalent metal cation-binding residues include C2, C6, C8, C11, C13, C16, C20, C21, C23, C24, C28, C31, C35, and C37. The tract at residues 17-43 (RKSCCSCCPAGCNNCAKGCVCKEPASS) is alpha.

It belongs to the metallothionein superfamily. Type 1 family.

Its function is as follows. Metallothioneins have a high content of cysteine residues that bind various heavy metals. The sequence is that of Metallothionein A from Colinus virginianus (Northern bobwhite).